The primary structure comprises 172 residues: Protein-export protein SecB (172 aa).

Belongs to the SecB family. In terms of assembly, homotetramer, a dimer of dimers. One homotetramer interacts with 1 SecA dimer.

Its subcellular location is the cytoplasm. In terms of biological role, one of the proteins required for the normal export of preproteins out of the cell cytoplasm. It is a molecular chaperone that binds to a subset of precursor proteins, maintaining them in a translocation-competent state. It also specifically binds to its receptor SecA. The protein is Protein-export protein SecB of Haemophilus ducreyi (strain 35000HP / ATCC 700724).